The primary structure comprises 106 residues: Small ribosomal subunit protein bS20 (106 aa).

The segment at 1 to 32 (MAQKKPKRNLSALKRHRQSLKRRLRNKAKKSA) is disordered.

Part of the 30S ribosomal subunit.

Functionally, one of the primary rRNA binding proteins, it binds directly to 16S rRNA where it nucleates assembly of the bottom of the body of the 30S subunit, by binding to several RNA helices of the 16S rRNA. The sequence is that of Small ribosomal subunit protein bS20 (rpsT) from Thermus thermophilus (strain ATCC 27634 / DSM 579 / HB8).